The following is a 1095-amino-acid chain: Putative patatin-like phospholipase domain-containing protein M110.7 (1095 aa).

The chain crosses the membrane as a helical span at residues 9-29; it reads LLLIFENILELCMCITLVILI. The disordered stretch occupies residues 75 to 113; that stretch reads HKKRSSKEEMTPDKKRDSSEKISKQPPRELFEPNEQEQV. Basic and acidic residues predominate over residues 80-105; the sequence is SKEEMTPDKKRDSSEKISKQPPRELF. Residues 144-237, 327-416, and 450-509 contribute to the a nucleoside 3',5'-cyclic phosphate site; these read VETL…LTSF, RKYE…IQFL, and IETG…TVMA. The PNPLA domain maps to 768 to 935; sequence IVFGGGGARG…VNNLPADIMR (168 aa). A GXGXXG motif is present at residues 772 to 777; the sequence is GGGARG. The short motif at 799–803 is the GXSXG element; it reads GTSIG. Ser801 acts as the Nucleophile in catalysis. Asp922 (proton acceptor) is an active-site residue. A DGA/G motif is present at residues 922–924; that stretch reads DGA.

It belongs to the NTE family.

It localises to the membrane. The protein is Putative patatin-like phospholipase domain-containing protein M110.7 of Caenorhabditis elegans.